The following is a 264-amino-acid chain: 3-methyl-2-oxobutanoate hydroxymethyltransferase 2 (264 aa).

2 residues coordinate Mg(2+): Asp44 and Asp83. 3-methyl-2-oxobutanoate-binding positions include 44–45 (DS), Asp83, and Lys111. Glu113 contacts Mg(2+). The active-site Proton acceptor is the Glu180.

This sequence belongs to the PanB family. As to quaternary structure, homodecamer; pentamer of dimers. It depends on Mg(2+) as a cofactor.

The protein resides in the cytoplasm. The enzyme catalyses 3-methyl-2-oxobutanoate + (6R)-5,10-methylene-5,6,7,8-tetrahydrofolate + H2O = 2-dehydropantoate + (6S)-5,6,7,8-tetrahydrofolate. Its pathway is cofactor biosynthesis; (R)-pantothenate biosynthesis; (R)-pantoate from 3-methyl-2-oxobutanoate: step 1/2. Catalyzes the reversible reaction in which hydroxymethyl group from 5,10-methylenetetrahydrofolate is transferred onto alpha-ketoisovalerate to form ketopantoate. The protein is 3-methyl-2-oxobutanoate hydroxymethyltransferase 2 of Hahella chejuensis (strain KCTC 2396).